The following is a 473-amino-acid chain: SHC-transforming protein 1 (473 aa).

Residues 1-26 (MNKLSGGGGRRTRVEGGQLGGEEWTR) are disordered. Phosphoserine is present on Ser-29. An N6-acetyllysine modification is found at Lys-44. The 184-residue stretch at 46–229 (MGPGVSYLVR…AGFDGSAWDE (184 aa)) folds into the PID domain. Residues 216-314 (HDRMAGFDGS…PSSGRELFDD (99 aa)) are disordered. A CH1 region spans residues 230-377 (EEEEPPDHQY…AMAEQLRGEP (148 aa)). Tyr-239, Tyr-240, and Tyr-317 each carry phosphotyrosine. A disordered region spans residues 328–348 (QAGAGAGPPNPTINGSAPRDL). Position 343 is a phosphoserine (Ser-343). Residues 378 to 469 (WFHGKLSRRE…GSELCLQQPV (92 aa)) form the SH2 domain.

In terms of assembly, interacts with CPNE3; this interaction may mediate the binding of CPNE3 with ERBB2. Interacts with the Trk receptors NTRK1, NTRK2 and NTRK3; in a phosphotyrosine-dependent manner. Interacts with the NPXY motif of tyrosine-phosphorylated IGF1R and INSR in vitro via the PID domain. Once activated, binds to GRB2. Interacts with tyrosine-phosphorylated CD3T and DDR2. Interacts with the N-terminal region of APS. Interacts with phosphorylated LRP1 and IRS4. Interacts with INPP5D/SHIP1 and INPPL1/SHIP2. Interacts with ALK, GAB2, GRB7 and KIT. Interacts with PTPN6/SHP (tyrosine phosphorylated). Identified in a complex containing FGFR4, NCAM1, CDH2, PLCG1, FRS2, SRC, SHC1, GAP43 and CTTN. Interacts with FLT4 (tyrosine-phosphorylated). Interacts with EPHB1 and GRB2; activates the MAPK/ERK cascade to regulate cell migration. Interacts with PDGFRB (tyrosine-phosphorylated). Interacts with ERBB4. Interacts with TEK/TIE2 (tyrosine-phosphorylated). Interacts with PTK2/FAK1. Interacts with CEACAM1; this interaction is CEACAM1-phosphorylation-dependent and mediates interaction with EGFR or INSR resulting in decrease coupling of SHC1 to the MAPK3/ERK1-MAPK1/ERK2 pathway. Interacts (via PID domain) with PEAK1 (when phosphorylated). Found in a complex with PPP1CA, PPP1CC, SHC1 and PEAK1. In terms of processing, phosphorylated by activated epidermal growth factor receptor. Phosphorylated in response to KIT signaling. Tyrosine phosphorylated in response to FLT3 and FLT4 signaling and by ligand-activated ALK. Tyrosine phosphorylated by ligand-activated PDGFRB. Tyrosine phosphorylated by TEK/TIE2. May be tyrosine phosphorylated by activated PTK2/FAK1. Tyrosine phosphorylated by activated PTK2B/PYK2. Dephosphorylation by PTPN2 may regulate interaction with GRB2.

The protein localises to the cytoplasm. It is found in the cell junction. It localises to the focal adhesion. Functionally, signaling adapter that couples activated growth factor receptors to signaling pathways. Participates in a signaling cascade initiated by activated KIT and KITLG/SCF. Participates in signaling downstream of the angiopoietin receptor TEK/TIE2, and plays a role in the regulation of endothelial cell migration and sprouting angiogenesis. The protein is SHC-transforming protein 1 (SHC1) of Bos taurus (Bovine).